The primary structure comprises 132 residues: Small ribosomal subunit protein uS8 (132 aa).

The protein belongs to the universal ribosomal protein uS8 family. In terms of assembly, part of the 30S ribosomal subunit. Contacts proteins S5 and S12.

In terms of biological role, one of the primary rRNA binding proteins, it binds directly to 16S rRNA central domain where it helps coordinate assembly of the platform of the 30S subunit. This is Small ribosomal subunit protein uS8 from Bradyrhizobium sp. (strain ORS 278).